The sequence spans 226 residues: Cytochrome c biogenesis ATP-binding export protein CcmA (226 aa).

The ABC transporter domain occupies 19–226 (LRANDLAFSR…LGGAHALPPA (208 aa)). 51–58 (GPNGSGKS) provides a ligand contact to ATP.

This sequence belongs to the ABC transporter superfamily. CcmA exporter (TC 3.A.1.107) family. As to quaternary structure, the complex is composed of two ATP-binding proteins (CcmA) and two transmembrane proteins (CcmB).

The protein localises to the cell inner membrane. The enzyme catalyses heme b(in) + ATP + H2O = heme b(out) + ADP + phosphate + H(+). Functionally, part of the ABC transporter complex CcmAB involved in the biogenesis of c-type cytochromes; once thought to export heme, this seems not to be the case, but its exact role is uncertain. Responsible for energy coupling to the transport system. In Cupriavidus pinatubonensis (strain JMP 134 / LMG 1197) (Cupriavidus necator (strain JMP 134)), this protein is Cytochrome c biogenesis ATP-binding export protein CcmA.